A 264-amino-acid polypeptide reads, in one-letter code: 3-methyl-2-oxobutanoate hydroxymethyltransferase (264 aa).

Mg(2+) contacts are provided by Asp-45 and Asp-84. 3-methyl-2-oxobutanoate contacts are provided by residues Asp-45–Ser-46, Asp-84, and Lys-112. Position 114 (Glu-114) interacts with Mg(2+). Glu-181 acts as the Proton acceptor in catalysis.

It belongs to the PanB family. In terms of assembly, homodecamer; pentamer of dimers. It depends on Mg(2+) as a cofactor.

It localises to the cytoplasm. The catalysed reaction is 3-methyl-2-oxobutanoate + (6R)-5,10-methylene-5,6,7,8-tetrahydrofolate + H2O = 2-dehydropantoate + (6S)-5,6,7,8-tetrahydrofolate. It functions in the pathway cofactor biosynthesis; (R)-pantothenate biosynthesis; (R)-pantoate from 3-methyl-2-oxobutanoate: step 1/2. Catalyzes the reversible reaction in which hydroxymethyl group from 5,10-methylenetetrahydrofolate is transferred onto alpha-ketoisovalerate to form ketopantoate. The protein is 3-methyl-2-oxobutanoate hydroxymethyltransferase of Shigella flexneri serotype 5b (strain 8401).